We begin with the raw amino-acid sequence, 333 residues long: Protoheme IX farnesyltransferase (333 aa).

8 helical membrane-spanning segments follow: residues 63-83 (LACTLGGGALAAAAAGVLNCI), 109-129 (AAFIGAISCTLAAAALLVSGV), 132-152 (LAAGLSLLGLCSYVLLYTAIL), 160-180 (IVIGGVAGAIPPLVGAAAASG), 188-208 (WLFSLVMLWTPAHFWALALLL), 214-234 (AVGIPMLPVIQGPVVTVRAIS), 245-265 (GFGVWALPEGGLLYGLLLIPF), and 292-312 (WSIFYMFGICLLLVVSRLPMA).

The protein belongs to the UbiA prenyltransferase family. Protoheme IX farnesyltransferase subfamily.

The protein localises to the cell inner membrane. The catalysed reaction is heme b + (2E,6E)-farnesyl diphosphate + H2O = Fe(II)-heme o + diphosphate. The protein operates within porphyrin-containing compound metabolism; heme O biosynthesis; heme O from protoheme: step 1/1. Its function is as follows. Converts heme B (protoheme IX) to heme O by substitution of the vinyl group on carbon 2 of heme B porphyrin ring with a hydroxyethyl farnesyl side group. The protein is Protoheme IX farnesyltransferase of Prochlorococcus marinus (strain MIT 9313).